The following is a 61-amino-acid chain: Large ribosomal subunit protein uL30 (61 aa).

Belongs to the universal ribosomal protein uL30 family. As to quaternary structure, part of the 50S ribosomal subunit.

The sequence is that of Large ribosomal subunit protein uL30 from Neisseria meningitidis serogroup C (strain 053442).